The chain runs to 405 residues: L-rhamnonate dehydratase (405 aa).

H33 and R59 together coordinate substrate. Residues D226, E252, and E280 each contribute to the Mg(2+) site. The active-site Proton acceptor is the H329. E349 is a substrate binding site.

This sequence belongs to the mandelate racemase/muconate lactonizing enzyme family. RhamD subfamily. Homooctamer; tetramer of dimers. Mg(2+) is required as a cofactor.

It catalyses the reaction L-rhamnonate = 2-dehydro-3-deoxy-L-rhamnonate + H2O. Its function is as follows. Catalyzes the dehydration of L-rhamnonate to 2-keto-3-deoxy-L-rhamnonate (KDR). In Escherichia coli (strain K12 / DH10B), this protein is L-rhamnonate dehydratase.